A 300-amino-acid chain; its full sequence is Sulfate adenylyltransferase subunit 2 (300 aa).

Residues 281 to 300 are disordered; it reads RAIDRDEAGSMEKKKREGYF.

It belongs to the PAPS reductase family. CysD subfamily. Heterodimer composed of CysD, the smaller subunit, and CysN.

The enzyme catalyses sulfate + ATP + H(+) = adenosine 5'-phosphosulfate + diphosphate. Its pathway is sulfur metabolism; hydrogen sulfide biosynthesis; sulfite from sulfate: step 1/3. In terms of biological role, with CysN forms the ATP sulfurylase (ATPS) that catalyzes the adenylation of sulfate producing adenosine 5'-phosphosulfate (APS) and diphosphate, the first enzymatic step in sulfur assimilation pathway. APS synthesis involves the formation of a high-energy phosphoric-sulfuric acid anhydride bond driven by GTP hydrolysis by CysN coupled to ATP hydrolysis by CysD. The sequence is that of Sulfate adenylyltransferase subunit 2 from Brucella melitensis biotype 2 (strain ATCC 23457).